The primary structure comprises 520 residues: MSGARTAPALFFLGCSALALGVSSASQEHREAEYYVAAVYEHPSVLSPNPLELVSRQEALELMKQNLDVYEQQVMAAAQKGVQIIVFPEDGIHGFNFTRTSIYPFLDFMPSPKLVRWNPCLEPFRFNDTEVLQRLSCMAIKGGMFLVANLGTKQPCLSSDPGCPQDGRYQFNTNVVFSDNGTLVDRYRKHNLYFEAAFDTPANVDLITFDTPFAGKFGVFTCFDILFFDPAVRLLRDFEVKHIVYPTAWMNQLPLLAAIEIQKAFATAFGVNVLAANIHHPTLGMTGSGIHTPLKSFWYHDMDDPKGHLIIAQVATNPQGLTGTGNTTSEMDPSHRKFLKILSGDPYCEKDAQEVHCDEAAKWNVNVPPTFHSEMMYDNFTLVPVWGTEGHLQVCSNSLCCHLLYERPTLSKELYALGVFDGLHTVHGTYYIQTCALVKCGGLGFDTCGQEITEAEGLFDFHLWGNFSTLYIFPLFLTSGMTLDTPDQLGWENDHYFLRKRGLSSGLVTAALYGRLYERK.

A signal peptide spans M1–G21. Residues N49 to P333 enclose the CN hydrolase domain. Catalysis depends on E89, which acts as the Proton acceptor. N96, N127, and N180 each carry an N-linked (GlcNAc...) asparagine glycan. Residue K189 is the Proton donor of the active site. The active-site Nucleophile is C222. 3 N-linked (GlcNAc...) asparagine glycosylation sites follow: N326, N379, and N466.

Belongs to the carbon-nitrogen hydrolase superfamily. BTD/VNN family.

It localises to the secreted. It is found in the extracellular space. It catalyses the reaction biocytin + H2O = biotin + L-lysine. The catalysed reaction is biotin amide + H2O = biotin + NH4(+). Its function is as follows. Catalytic release of biotin from biocytin, the product of biotin-dependent carboxylases degradation. The sequence is that of Biotinidase (Btd) from Mus musculus (Mouse).